The sequence spans 361 residues: tRNA/tmRNA (uracil-C(5))-methyltransferase (361 aa).

Q185, Y213, N218, E234, and D294 together coordinate S-adenosyl-L-methionine. C319 functions as the Nucleophile in the catalytic mechanism. E353 acts as the Proton acceptor in catalysis.

This sequence belongs to the class I-like SAM-binding methyltransferase superfamily. RNA M5U methyltransferase family. TrmA subfamily.

It catalyses the reaction uridine(54) in tRNA + S-adenosyl-L-methionine = 5-methyluridine(54) in tRNA + S-adenosyl-L-homocysteine + H(+). It carries out the reaction uridine(341) in tmRNA + S-adenosyl-L-methionine = 5-methyluridine(341) in tmRNA + S-adenosyl-L-homocysteine + H(+). Dual-specificity methyltransferase that catalyzes the formation of 5-methyluridine at position 54 (m5U54) in all tRNAs, and that of position 341 (m5U341) in tmRNA (transfer-mRNA). This chain is tRNA/tmRNA (uracil-C(5))-methyltransferase, found in Pseudomonas putida (strain ATCC 700007 / DSM 6899 / JCM 31910 / BCRC 17059 / LMG 24140 / F1).